A 475-amino-acid polypeptide reads, in one-letter code: Glycogen synthase (475 aa).

K15 provides a ligand contact to ADP-alpha-D-glucose.

This sequence belongs to the glycosyltransferase 1 family. Bacterial/plant glycogen synthase subfamily.

It catalyses the reaction [(1-&gt;4)-alpha-D-glucosyl](n) + ADP-alpha-D-glucose = [(1-&gt;4)-alpha-D-glucosyl](n+1) + ADP + H(+). The protein operates within glycan biosynthesis; glycogen biosynthesis. Functionally, synthesizes alpha-1,4-glucan chains using ADP-glucose. This chain is Glycogen synthase, found in Alkaliphilus metalliredigens (strain QYMF).